A 556-amino-acid polypeptide reads, in one-letter code: 2-succinyl-5-enolpyruvyl-6-hydroxy-3-cyclohexene-1-carboxylate synthase (556 aa).

It belongs to the TPP enzyme family. MenD subfamily. As to quaternary structure, homodimer. It depends on Mg(2+) as a cofactor. The cofactor is Mn(2+). Requires thiamine diphosphate as cofactor.

The enzyme catalyses isochorismate + 2-oxoglutarate + H(+) = 5-enolpyruvoyl-6-hydroxy-2-succinyl-cyclohex-3-ene-1-carboxylate + CO2. Its pathway is quinol/quinone metabolism; 1,4-dihydroxy-2-naphthoate biosynthesis; 1,4-dihydroxy-2-naphthoate from chorismate: step 2/7. It participates in quinol/quinone metabolism; menaquinone biosynthesis. Catalyzes the thiamine diphosphate-dependent decarboxylation of 2-oxoglutarate and the subsequent addition of the resulting succinic semialdehyde-thiamine pyrophosphate anion to isochorismate to yield 2-succinyl-5-enolpyruvyl-6-hydroxy-3-cyclohexene-1-carboxylate (SEPHCHC). This chain is 2-succinyl-5-enolpyruvyl-6-hydroxy-3-cyclohexene-1-carboxylate synthase, found in Saccharopolyspora erythraea (strain ATCC 11635 / DSM 40517 / JCM 4748 / NBRC 13426 / NCIMB 8594 / NRRL 2338).